Here is a 348-residue protein sequence, read N- to C-terminus: 3-isopropylmalate dehydrogenase (348 aa).

Residue 76–87 (GPKWTDPNNRPE) participates in NAD(+) binding. Positions 94, 104, 132, and 217 each coordinate substrate. 3 residues coordinate Mg(2+): D217, D241, and D245. An NAD(+)-binding site is contributed by 275-287 (GSAPDIAGKNVAN).

The protein belongs to the isocitrate and isopropylmalate dehydrogenases family. LeuB type 1 subfamily. As to quaternary structure, homodimer. The cofactor is Mg(2+). Mn(2+) serves as cofactor.

It localises to the cytoplasm. It catalyses the reaction (2R,3S)-3-isopropylmalate + NAD(+) = 4-methyl-2-oxopentanoate + CO2 + NADH. It participates in amino-acid biosynthesis; L-leucine biosynthesis; L-leucine from 3-methyl-2-oxobutanoate: step 3/4. Its function is as follows. Catalyzes the oxidation of 3-carboxy-2-hydroxy-4-methylpentanoate (3-isopropylmalate) to 3-carboxy-4-methyl-2-oxopentanoate. The product decarboxylates to 4-methyl-2 oxopentanoate. In Staphylococcus aureus (strain NCTC 8325 / PS 47), this protein is 3-isopropylmalate dehydrogenase.